The following is a 235-amino-acid chain: Probable transcriptional regulatory protein JJD26997_0557 (235 aa).

Belongs to the TACO1 family.

Its subcellular location is the cytoplasm. The sequence is that of Probable transcriptional regulatory protein JJD26997_0557 from Campylobacter jejuni subsp. doylei (strain ATCC BAA-1458 / RM4099 / 269.97).